Here is a 363-residue protein sequence, read N- to C-terminus: 3-dehydroquinate synthase (363 aa).

Residues 109-113, 133-134, lysine 146, and lysine 155 contribute to the NAD(+) site; these read GATTD and TT. Residues glutamate 188, histidine 251, and histidine 267 each coordinate Zn(2+).

Belongs to the sugar phosphate cyclases superfamily. Dehydroquinate synthase family. The cofactor is NAD(+). Requires Co(2+) as cofactor. Zn(2+) is required as a cofactor.

The protein localises to the cytoplasm. It carries out the reaction 7-phospho-2-dehydro-3-deoxy-D-arabino-heptonate = 3-dehydroquinate + phosphate. The protein operates within metabolic intermediate biosynthesis; chorismate biosynthesis; chorismate from D-erythrose 4-phosphate and phosphoenolpyruvate: step 2/7. Its function is as follows. Catalyzes the conversion of 3-deoxy-D-arabino-heptulosonate 7-phosphate (DAHP) to dehydroquinate (DHQ). The chain is 3-dehydroquinate synthase from Streptomyces avermitilis (strain ATCC 31267 / DSM 46492 / JCM 5070 / NBRC 14893 / NCIMB 12804 / NRRL 8165 / MA-4680).